The sequence spans 224 residues: UPF0758 protein PLES_57141 (224 aa).

The MPN domain occupies 102–224 (ILESPQAVRD…PLSLAEYGWL (123 aa)). Histidine 173, histidine 175, and aspartate 186 together coordinate Zn(2+). The JAMM motif signature appears at 173-186 (HNHPSGDARPSLAD).

Belongs to the UPF0758 family.

The chain is UPF0758 protein PLES_57141 from Pseudomonas aeruginosa (strain LESB58).